The sequence spans 171 residues: MRIFGIDCGSEITGYGIVECPDGTPRSGQPDLRLIAFGGIRPAKKLTLAERLAFVHRELLTQLAAHQPDLVAVEEVFYSVNAKSALKLGHVRGVALLAAATAGLPIAEYAPLTIKSTVTGYGLAQKEQVQFMVARLLHMPEPPEPADAADALAIAICHIHHAQTIQAQQSR.

Residues aspartate 7, glutamate 74, and aspartate 147 contribute to the active site. The Mg(2+) site is built by aspartate 7, glutamate 74, and aspartate 147.

The protein belongs to the RuvC family. Homodimer which binds Holliday junction (HJ) DNA. The HJ becomes 2-fold symmetrical on binding to RuvC with unstacked arms; it has a different conformation from HJ DNA in complex with RuvA. In the full resolvosome a probable DNA-RuvA(4)-RuvB(12)-RuvC(2) complex forms which resolves the HJ. Mg(2+) is required as a cofactor.

Its subcellular location is the cytoplasm. The enzyme catalyses Endonucleolytic cleavage at a junction such as a reciprocal single-stranded crossover between two homologous DNA duplexes (Holliday junction).. The RuvA-RuvB-RuvC complex processes Holliday junction (HJ) DNA during genetic recombination and DNA repair. Endonuclease that resolves HJ intermediates. Cleaves cruciform DNA by making single-stranded nicks across the HJ at symmetrical positions within the homologous arms, yielding a 5'-phosphate and a 3'-hydroxyl group; requires a central core of homology in the junction. The consensus cleavage sequence is 5'-(A/T)TT(C/G)-3'. Cleavage occurs on the 3'-side of the TT dinucleotide at the point of strand exchange. HJ branch migration catalyzed by RuvA-RuvB allows RuvC to scan DNA until it finds its consensus sequence, where it cleaves and resolves the cruciform DNA. In Acidobacterium capsulatum (strain ATCC 51196 / DSM 11244 / BCRC 80197 / JCM 7670 / NBRC 15755 / NCIMB 13165 / 161), this protein is Crossover junction endodeoxyribonuclease RuvC.